A 236-amino-acid chain; its full sequence is MSIHIAAQQGEIADKILLPGDPLRAKFIAENFLDDAVCFNEVRNMFGYTGTYKGHCVSVMGTGMGMPSISIYARELIVDYGVKKLIRVGTAGSLNEEVHVRELVLAQAAATNSNIVRNDWPQYDFPQIASFDLLDKAYHIAKKLGMTTHVGNVLSSDVFYSNYFEKNIELGKWGVKAVEMEAAALYYLAAQYHVDALAIMTISDSLVNPDEDTTAEERQNTFTDMMKVGLETLIAE.

A purine D-ribonucleoside is bound at residue H4. Residues G20, R24, R43, and 87 to 90 (RVGT) each bind phosphate. A purine D-ribonucleoside-binding positions include 179-181 (EME) and 203-204 (SD). D204 serves as the catalytic Proton donor.

The protein belongs to the PNP/UDP phosphorylase family. In terms of assembly, homohexamer; trimer of homodimers.

The catalysed reaction is a purine D-ribonucleoside + phosphate = a purine nucleobase + alpha-D-ribose 1-phosphate. It catalyses the reaction a purine 2'-deoxy-D-ribonucleoside + phosphate = a purine nucleobase + 2-deoxy-alpha-D-ribose 1-phosphate. Catalyzes the reversible phosphorolytic breakdown of the N-glycosidic bond in the beta-(deoxy)ribonucleoside molecules, with the formation of the corresponding free purine bases and pentose-1-phosphate. The protein is Purine nucleoside phosphorylase DeoD-type of Streptococcus pneumoniae (strain CGSP14).